Reading from the N-terminus, the 253-residue chain is Short chain dehydrogenase ple7 (253 aa).

The chain crosses the membrane as a helical span at residues 5-25 (IVIVTGASHGIGLATVNLLLA). Valine 8, arginine 116, tyrosine 148, lysine 152, and asparagine 184 together coordinate NADP(+). The active-site Proton acceptor is tyrosine 148. Lysine 152 functions as the Lowers pKa of active site Tyr in the catalytic mechanism. N-linked (GlcNAc...) asparagine glycosylation is present at asparagine 187.

This sequence belongs to the short-chain dehydrogenases/reductases (SDR) family.

The protein resides in the membrane. It participates in secondary metabolite biosynthesis; terpenoid biosynthesis. In terms of biological role, short chain dehydrogenase; part of the gene cluster that mediates the biosynthesis of pleuromutilin, a tricyclic diterpene showing antibacterial properties. The geranylgeranyl diphosphate (GGPP) synthase ple4 catalyzes the first step in pleuromutilin biosynthesis. GGPP is then substrate of the premutilin synthase (PS) ple3 to yield premutilin. Premutilin synthase is a bifunctional enzyme composed of the fusion of a class II diterpene cyclase (DTC) and a class I diterpene synthase (DTS), with the corresponding domains and active sites containing characteristic aspartate-rich motifs. GGPP is first converted to mutildienyl-diphosphate (MPP) at the class II DTC site. MPP is subsequently further cyclized at the class I DTS site, followed by a 1,5-hydride shift and addition of water prior to terminating deprotonation, to yield premutilin. The cytochrome P450 monooxygenases ple5 and ple6 hydroxylate premutilin at C-11 and C-3, respectively, producing 11-hydroxypremutilin and 3-hydroxypremutilin. The combination of the actions of both ple5 and ple6 leads to the production of 3,11-dihydroxypremutilin. The short chain dehydrogenase ple7 further converts 3,11-dihydroxypremutilin into mutilin. The acetyltransferase ple2 then acetylates mutilin to produce 14-O-acetylmutilin. Finally, the cytochrome P450 monooxygenase ple1 catalyzes hydroxylation on the alpha position of the acetyl side chain of 14-O-acetylmutilin to yield pleuromutilin. This is Short chain dehydrogenase ple7 from Rhodocybe pseudopiperita (Clitopilus pseudopiperitus).